The following is a 396-amino-acid chain: MTAVATHAVRKIFLIATEESGDRLGASLMRELRDRLGAAVRFEGVGGRAMAREGLTSLFPIEELSIIGLSAVARRLPTILRHIRTAAHAALQAAPDVLVIIDSPDFTHRVARRVRARDPSIPIVNYVSPTVWAWRPGRAKVMRKYVDHVLALLPFEPDEYRRLQGPPCSYVGHPLTEQIATLRPNPEEQLRRDAAPPVLLVLPGSRRSEIRHHMAVFGEALGLLQAQGVAFELILPTMPHLEALIAEALKHWPLQPRVVVGENDKRAAFRIARAALAKSGTVTLELAVAGVPMVTAYRAGQLEAWIVRRRITSASVILANLVVGENVAPEYLQEECTAPTLAAALRDVLADSPLRQRQLAAFGRIDAIMSTGAQSPSACAADIVLGLLPAAAPALR.

It belongs to the LpxB family.

The enzyme catalyses a lipid X + a UDP-2-N,3-O-bis[(3R)-3-hydroxyacyl]-alpha-D-glucosamine = a lipid A disaccharide + UDP + H(+). The protein operates within bacterial outer membrane biogenesis; LPS lipid A biosynthesis. In terms of biological role, condensation of UDP-2,3-diacylglucosamine and 2,3-diacylglucosamine-1-phosphate to form lipid A disaccharide, a precursor of lipid A, a phosphorylated glycolipid that anchors the lipopolysaccharide to the outer membrane of the cell. This Rhodopseudomonas palustris (strain BisB18) protein is Lipid-A-disaccharide synthase.